The primary structure comprises 367 residues: Teichoic acid glycerol-phosphate primase (367 aa).

It belongs to the CDP-glycerol glycerophosphotransferase family.

The protein localises to the cell membrane. It catalyses the reaction N-acetyl-beta-D-mannosaminyl-(1-&gt;4)-N-acetyl-alpha-D-glucosaminyl di-trans,octa-cis-undecaprenyl diphosphate + CDP-glycerol = 4-O-[(2R)-glycerylphospho]-N-acetyl-beta-D-mannosaminyl-(1-&gt;4)-N-acetyl-alpha-D-glucosaminyl di-trans,octa-cis-undecaprenyl diphosphate + CMP + H(+). It functions in the pathway cell wall biogenesis; poly(ribitol phosphate) teichoic acid biosynthesis. Catalyzes the addition of a single glycerol phosphate residue to the prenoldiphosphate-linked disaccharide. This Staphylococcus aureus (strain NCTC 8325 / PS 47) protein is Teichoic acid glycerol-phosphate primase (tarB).